Here is a 152-residue protein sequence, read N- to C-terminus: Transcriptional repressor NrdR (152 aa).

A zinc finger spans residues 3 to 34; the sequence is CPYCQHPDSDVIDTRKLHNGETIRRRRKCEAC. In terms of domain architecture, ATP-cone spans 49–139; that stretch reads ITVVKKNGER…VYRSFADIGK (91 aa).

Belongs to the NrdR family. Requires Zn(2+) as cofactor.

Its function is as follows. Negatively regulates transcription of bacterial ribonucleotide reductase nrd genes and operons by binding to NrdR-boxes. The sequence is that of Transcriptional repressor NrdR from Roseiflexus castenholzii (strain DSM 13941 / HLO8).